Consider the following 360-residue polypeptide: MKALILVGGYGTRLRPLTLSIPKPLVDFCNKPILLHQVEALASAGVDHVILAVSYMSQMLEKEMKAQEQRLGIRISMSHEEEPLGTAGPLALARDLLSETAEPFFVLNSDVICDFPFQAMVQFHRHHGQEGSILVTKVEEPSKYGVVVCEADTGRIHRFVEKPQVFVSNKINAGMYILSPAVLQRIQLQPTSIEKEIFPVMAKEGQLYAMELQGFWMDIGQPKDFLTGMCLFLQSLRQKQPEQLCSGPGIVGNVLVDPSARIGKNCSIGPNVSLGPGVVVEDGVCIRRCTVLRDARIRSHSWLESCIVCWRCRVGQWVRMENVTVLGEDVIVNDELYLNGASVLPHKSIGESVPEPGIIM.

The segment at 2–222 is substrate-binding domain; sequence KALILVGGYG…QGFWMDIGQP (221 aa). Asp110 provides a ligand contact to GDP-alpha-D-mannose. Asp110 contributes to the Mg(2+) binding site. The active site involves Lys162. Asp218 lines the GDP-alpha-D-mannose pocket. Asp218 lines the Mg(2+) pocket. The tract at residues 245–360 is hexapeptide repeat domain; the sequence is CSGPGIVGNV…ESVPEPGIIM (116 aa).

It belongs to the transferase hexapeptide repeat family. Component of the GMPPA-GMPPB mannose-1-phosphate guanylyltransferase complex composed of 4 GMPPA subunits and 8 GMPPB subunits; the complex is organized into three layers, a central layer made up of 2 GMPPA dimers sandwiched between two layers each made up of 2 GMPPB dimers. GMPPB catalytic activity is reduced when part of the complex and binding of GDP-alpha-D-Mannose by GMPPA induces allosteric feedback inhibition of GMPPB. It depends on Mg(2+) as a cofactor. In terms of tissue distribution, expressed in the liver (at protein level).

Its subcellular location is the cytoplasm. It catalyses the reaction alpha-D-mannose 1-phosphate + GTP + H(+) = GDP-alpha-D-mannose + diphosphate. Its pathway is nucleotide-sugar biosynthesis; GDP-alpha-D-mannose biosynthesis; GDP-alpha-D-mannose from alpha-D-mannose 1-phosphate (GTP route): step 1/1. Its activity is regulated as follows. Enzyme activity is reduced by incorporation into the GMPPA-GMPPB mannose-1-phosphate guanylyltransferase complex. Allosterically inhibited, when part of the GMPPA-GMPPB complex, by GDP-alpha-D-mannose binding to GMPPA. Functionally, catalytic subunit of the GMPPA-GMPPB mannose-1-phosphate guanylyltransferase complex. Catalyzes the formation of GDP-mannose, an essential precursor of glycan moieties of glycoproteins and glycolipids. Can catalyze the reverse reaction in vitro. Together with GMPPA regulates GDP-alpha-D-mannose levels. The polypeptide is Mannose-1-phosphate guanylyltransferase catalytic subunit beta (Sus scrofa (Pig)).